The chain runs to 142 residues: Large ribosomal subunit protein uL11 (142 aa).

It belongs to the universal ribosomal protein uL11 family. Part of the ribosomal stalk of the 50S ribosomal subunit. Interacts with L10 and the large rRNA to form the base of the stalk. L10 forms an elongated spine to which L12 dimers bind in a sequential fashion forming a multimeric L10(L12)X complex. Post-translationally, one or more lysine residues are methylated.

Functionally, forms part of the ribosomal stalk which helps the ribosome interact with GTP-bound translation factors. This Bradyrhizobium sp. (strain BTAi1 / ATCC BAA-1182) protein is Large ribosomal subunit protein uL11.